Reading from the N-terminus, the 378-residue chain is E3 ubiquitin-protein ligase ATL9 (378 aa).

The signal sequence occupies residues 1 to 33; the sequence is MAILDTKSSRWIPHNLLFLLLLLLLQSVPYGFG. Residues 51–71 traverse the membrane as a helical segment; sequence VVVVITVLFLVIFFMVFGSIF. The segment at 135 to 177 adopts an RING-type; atypical zinc-finger fold; sequence CAVCLCEFEDDETLRLMPPCCHVFHADCVDVWLSEHSTCPLCR. 3 disordered regions span residues 187–211, 300–326, and 350–378; these read DDDDSTESYSGTDPGTISSSTDPER, ARSSRSGYRSGSVGSERSAFPYGRKSN, and FSGDAPKNLPTSIEAGERSFERLRPDERV. Residues 193–207 show a composition bias toward polar residues; that stretch reads ESYSGTDPGTISSST. Over residues 301-317 the composition is skewed to low complexity; it reads RSSRSGYRSGSVGSERS. The span at 364-378 shows a compositional bias: basic and acidic residues; it reads AGERSFERLRPDERV.

The protein belongs to the RING-type zinc finger family. ATL subfamily.

It localises to the membrane. It catalyses the reaction S-ubiquitinyl-[E2 ubiquitin-conjugating enzyme]-L-cysteine + [acceptor protein]-L-lysine = [E2 ubiquitin-conjugating enzyme]-L-cysteine + N(6)-ubiquitinyl-[acceptor protein]-L-lysine.. It participates in protein modification; protein ubiquitination. E3 ubiquitin-protein ligase able to catalyze polyubiquitination with ubiquitin-conjugating enzyme E2 UBC8 in vitro. May be involved in the early steps of the plant defense signaling pathway. The polypeptide is E3 ubiquitin-protein ligase ATL9 (ATL9) (Arabidopsis thaliana (Mouse-ear cress)).